The chain runs to 659 residues: Mannosyl-oligosaccharide 1,2-alpha-mannosidase IA (659 aa).

At 1–48 (MPVGGLLPLFSSPAGGGLGGGLGGGLGGGGGGGGRKGSGPSAFRLTEK) the chain is on the cytoplasmic side. A helical; Signal-anchor for type II membrane protein membrane pass occupies residues 49-69 (FVLLLVFSAFITLCFGAIFFL). At 70–659 (PDSSKLLSGV…NIKKVEDNEK (590 aa)) the chain is on the lumenal side. The tract at residues 88-121 (QPAADHKPGPGARAEDAADGRARPGEEGAPGDPA) is disordered. Residues 91–113 (ADHKPGPGARAEDAADGRARPGE) are compositionally biased toward basic and acidic residues. A disulfide bridge links Cys482 with Cys514. Glu528 serves as the catalytic Proton donor. Residue Thr639 participates in Ca(2+) binding.

Belongs to the glycosyl hydrolase 47 family. Ca(2+) serves as cofactor.

It localises to the endoplasmic reticulum membrane. It carries out the reaction N(4)-(alpha-D-Man-(1-&gt;2)-alpha-D-Man-(1-&gt;2)-alpha-D-Man-(1-&gt;3)-[alpha-D-Man-(1-&gt;2)-alpha-D-Man-(1-&gt;3)-[alpha-D-Man-(1-&gt;2)-alpha-D-Man-(1-&gt;6)]-alpha-D-Man-(1-&gt;6)]-beta-D-Man-(1-&gt;4)-beta-D-GlcNAc-(1-&gt;4)-beta-D-GlcNAc)-L-asparaginyl-[protein] (N-glucan mannose isomer 9A1,2,3B1,2,3) + 4 H2O = N(4)-(alpha-D-Man-(1-&gt;3)-[alpha-D-Man-(1-&gt;3)-[alpha-D-Man-(1-&gt;6)]-alpha-D-Man-(1-&gt;6)]-beta-D-Man-(1-&gt;4)-beta-D-GlcNAc-(1-&gt;4)-beta-D-GlcNAc)-L-asparaginyl-[protein] (N-glucan mannose isomer 5A1,2) + 4 beta-D-mannose. The catalysed reaction is N(4)-(alpha-D-Man-(1-&gt;2)-alpha-D-Man-(1-&gt;2)-alpha-D-Man-(1-&gt;3)-[alpha-D-Man-(1-&gt;3)-[alpha-D-Man-(1-&gt;2)-alpha-D-Man-(1-&gt;6)]-alpha-D-Man-(1-&gt;6)]-beta-D-Man-(1-&gt;4)-beta-D-GlcNAc-(1-&gt;4)-beta-D-GlcNAc)-L-asparaginyl-[protein] (N-glucan mannose isomer 8A1,2,3B1,3) + 3 H2O = N(4)-(alpha-D-Man-(1-&gt;3)-[alpha-D-Man-(1-&gt;3)-[alpha-D-Man-(1-&gt;6)]-alpha-D-Man-(1-&gt;6)]-beta-D-Man-(1-&gt;4)-beta-D-GlcNAc-(1-&gt;4)-beta-D-GlcNAc)-L-asparaginyl-[protein] (N-glucan mannose isomer 5A1,2) + 3 beta-D-mannose. The protein operates within protein modification; protein glycosylation. Inhibited by both 1-deoxymannojirimycin and kifunensine. In terms of biological role, involved in the maturation of Asn-linked oligosaccharides. Progressively trim alpha-1,2-linked mannose residues from Man(9)GlcNAc(2) to produce Man(5)GlcNAc(2). This chain is Mannosyl-oligosaccharide 1,2-alpha-mannosidase IA (MAN1A1), found in Sus scrofa (Pig).